The primary structure comprises 628 residues: Phosphomethylpyrimidine synthase (628 aa).

The interval Met1–Gln22 is disordered. Over residues Thr7–Gln22 the composition is skewed to polar residues. Substrate is bound by residues Asn232, Met261, Tyr290, His326, Ser346–Gly348, Asp387–Arg390, and Glu426. Position 430 (His430) interacts with Zn(2+). Tyr453 provides a ligand contact to substrate. Zn(2+) is bound at residue His494. Residues Cys574, Cys577, and Cys582 each coordinate [4Fe-4S] cluster.

The protein belongs to the ThiC family. Homodimer. It depends on [4Fe-4S] cluster as a cofactor.

It carries out the reaction 5-amino-1-(5-phospho-beta-D-ribosyl)imidazole + S-adenosyl-L-methionine = 4-amino-2-methyl-5-(phosphooxymethyl)pyrimidine + CO + 5'-deoxyadenosine + formate + L-methionine + 3 H(+). It participates in cofactor biosynthesis; thiamine diphosphate biosynthesis. Catalyzes the synthesis of the hydroxymethylpyrimidine phosphate (HMP-P) moiety of thiamine from aminoimidazole ribotide (AIR) in a radical S-adenosyl-L-methionine (SAM)-dependent reaction. The polypeptide is Phosphomethylpyrimidine synthase (Pseudomonas putida (strain W619)).